The following is a 165-amino-acid chain: Thiol peroxidase (165 aa).

In terms of domain architecture, Thioredoxin spans 17–165; the sequence is PQVGEIVENF…NYEAALAVLA (149 aa). Cys59 functions as the Cysteine sulfenic acid (-SOH) intermediate in the catalytic mechanism. Residues Cys59 and Cys93 are joined by a disulfide bond.

This sequence belongs to the peroxiredoxin family. Tpx subfamily. Homodimer.

The enzyme catalyses a hydroperoxide + [thioredoxin]-dithiol = an alcohol + [thioredoxin]-disulfide + H2O. Its function is as follows. Thiol-specific peroxidase that catalyzes the reduction of hydrogen peroxide and organic hydroperoxides to water and alcohols, respectively. Plays a role in cell protection against oxidative stress by detoxifying peroxides. This is Thiol peroxidase from Haemophilus influenzae (strain ATCC 51907 / DSM 11121 / KW20 / Rd).